A 634-amino-acid chain; its full sequence is Chaperone protein HtpG (634 aa).

The tract at residues 1–344 (MSETVSHNKE…SNDLPLNVSR (344 aa)) is a; substrate-binding. The b stretch occupies residues 345-561 (EILQDNKVTQ…DFEMGTQMAK (217 aa)). The interval 562–634 (LLEAAGQAVP…GAINKLLTKV (73 aa)) is c.

Belongs to the heat shock protein 90 family. In terms of assembly, homodimer.

It is found in the cytoplasm. Its function is as follows. Molecular chaperone. Has ATPase activity. The protein is Chaperone protein HtpG of Vibrio campbellii (strain ATCC BAA-1116).